We begin with the raw amino-acid sequence, 367 residues long: Phospho-N-acetylmuramoyl-pentapeptide-transferase (367 aa).

The next 10 membrane-spanning stretches (helical) occupy residues L16–F36, T62–V82, M87–L107, F125–Y145, V158–I178, S190–A210, L214–Y234, Q240–L260, Q264–I284, and F326–P346.

Belongs to the glycosyltransferase 4 family. MraY subfamily. The cofactor is Mg(2+).

Its subcellular location is the cell membrane. The catalysed reaction is UDP-N-acetyl-alpha-D-muramoyl-L-alanyl-gamma-D-glutamyl-meso-2,6-diaminopimeloyl-D-alanyl-D-alanine + di-trans,octa-cis-undecaprenyl phosphate = di-trans,octa-cis-undecaprenyl diphospho-N-acetyl-alpha-D-muramoyl-L-alanyl-D-glutamyl-meso-2,6-diaminopimeloyl-D-alanyl-D-alanine + UMP. It functions in the pathway cell wall biogenesis; peptidoglycan biosynthesis. In terms of biological role, catalyzes the initial step of the lipid cycle reactions in the biosynthesis of the cell wall peptidoglycan: transfers peptidoglycan precursor phospho-MurNAc-pentapeptide from UDP-MurNAc-pentapeptide onto the lipid carrier undecaprenyl phosphate, yielding undecaprenyl-pyrophosphoryl-MurNAc-pentapeptide, known as lipid I. This Chloroflexus aurantiacus (strain ATCC 29366 / DSM 635 / J-10-fl) protein is Phospho-N-acetylmuramoyl-pentapeptide-transferase.